The chain runs to 390 residues: Ankyrin repeat domain-containing protein 63 (390 aa).

ANK repeat units lie at residues 11–40, 46–79, 83–112, 116–145, and 153–182; these read AGTRTFLEAMQAGKVHLARFVLDALDRSII, QGRTPLMVAVGLPDPAMRSRFVRLLLEQGAAVNL, RGRTALSLACERGHLDAVQLLVQFSGDPEA, AGNSPVMWAAACGHGAVLEFLVRSFRRLGL, and AGLTALQLAASRGHGTCVQALTGPWGRAAA. 2 disordered regions span residues 181–213 and 226–245; these read AAAAAARGSNSDSPPGHPAPAPSPERRRPSPRR and AGGHGHGHGHGHGHGGELAS. Ser-193 is subject to Phosphoserine. The residue at position 304 (Ser-304) is a Phosphoserine. Residues 320–377 are disordered; that stretch reads VGLSPHPEGCPGSGRLGLRRRSTAPDIPSLVGEASGPESGPELENNALPFSVPGPKPW.

This is Ankyrin repeat domain-containing protein 63 from Mus musculus (Mouse).